The chain runs to 295 residues: Sulfotransferase 1E1 (295 aa).

48–53 contributes to the 3'-phosphoadenylyl sulfate binding site; the sequence is KSGTTW. 106-108 contacts substrate; that stretch reads KTH. Histidine 108 functions as the Proton acceptor in the catalytic mechanism. 3'-phosphoadenylyl sulfate is bound by residues arginine 130 and serine 138. Residue serine 156 is modified to Phosphoserine. 3'-phosphoadenylyl sulfate is bound by residues tyrosine 193, 227–232, and 257–259; these read TSFQEM and RKG.

Belongs to the sulfotransferase 1 family. In terms of assembly, homodimer. In terms of tissue distribution, testis and at very low level in the placenta.

It localises to the cytoplasm. The protein localises to the cytosol. The enzyme catalyses estrone + 3'-phosphoadenylyl sulfate = estrone 3-sulfate + adenosine 3',5'-bisphosphate + H(+). The catalysed reaction is 17beta-estradiol + 3'-phosphoadenylyl sulfate = 17beta-estradiol 3-sulfate + adenosine 3',5'-bisphosphate + H(+). It catalyses the reaction (24S)-hydroxycholesterol + 3'-phosphoadenylyl sulfate = (24S)-hydroxycholesterol 3-sulfate + adenosine 3',5'-bisphosphate + H(+). It carries out the reaction 3beta-hydroxyandrost-5-en-17-one + 3'-phosphoadenylyl sulfate = dehydroepiandrosterone 3-sulfate + adenosine 3',5'-bisphosphate + H(+). The enzyme catalyses 4-ethylphenol + 3'-phosphoadenylyl sulfate = 4-ethylphenyl sulfate + adenosine 3',5'-bisphosphate + H(+). With respect to regulation, inhibited by estradiol. Sulfotransferase that utilizes 3'-phospho-5'-adenylyl sulfate (PAPS) as sulfonate donor to catalyze the sulfate conjugation of estradiol and estrone. Is a key enzyme in estrogen homeostasis, the sulfation of estrogens leads to their inactivation. Also sulfates dehydroepiandrosterone, pregnenolone, (24S)-hydroxycholesterol and xenobiotic compounds like ethinylestradiol, equalenin, diethyl stilbesterol and 1-naphthol at significantly lower efficiency. Does not sulfonate cortisol, testosterone and dopamine. May play a role in gut microbiota-host metabolic interaction. O-sulfonates 4-ethylphenol (4-EP), a dietary tyrosine-derived metabolite produced by gut bacteria. The product 4-EPS crosses the blood-brain barrier and may negatively regulate oligodendrocyte maturation and myelination, affecting the functional connectivity of different brain regions associated with the limbic system. The protein is Sulfotransferase 1E1 (Sult1e1) of Mus musculus (Mouse).